The chain runs to 889 residues: Alanine--tRNA ligase (889 aa).

4 residues coordinate Zn(2+): H569, H573, C671, and H675.

The protein belongs to the class-II aminoacyl-tRNA synthetase family. The cofactor is Zn(2+).

The protein resides in the cytoplasm. It catalyses the reaction tRNA(Ala) + L-alanine + ATP = L-alanyl-tRNA(Ala) + AMP + diphosphate. Functionally, catalyzes the attachment of alanine to tRNA(Ala) in a two-step reaction: alanine is first activated by ATP to form Ala-AMP and then transferred to the acceptor end of tRNA(Ala). Also edits incorrectly charged Ser-tRNA(Ala) and Gly-tRNA(Ala) via its editing domain. The polypeptide is Alanine--tRNA ligase (Parasynechococcus marenigrum (strain WH8102)).